The sequence spans 71 residues: Protein MMP24OS (71 aa).

Residues 1 to 10 show a composition bias toward gly residues; sequence MGAQLSGGRG. Residues 1–61 form a disordered region; sequence MGAQLSGGRG…PSPWGPLDDV (61 aa). Pro residues predominate over residues 36–55; that stretch reads HPPQPQPQPQPQPQPEPSPW.

The polypeptide is Protein MMP24OS (Homo sapiens (Human)).